We begin with the raw amino-acid sequence, 209 residues long: D-aminoacyl-tRNA deacylase 1 (209 aa).

The Mg(2+) site is built by Val-4, Gln-6, and Cys-28. Positions 139-140 (GP) match the Gly-cisPro motif, important for rejection of L-amino acids motif. The interval 142 to 209 (TIELESPAPG…EGDVSSEREP (68 aa)) is disordered. Composition is skewed to basic and acidic residues over residues 159 to 170 (QLSKLEKQQQRK) and 181 to 194 (SSKE…EDRS). Ser-197, Ser-204, and Ser-205 each carry phosphoserine.

The protein belongs to the DTD family. In terms of assembly, homodimer. Interacts with CDC45 and TOPBP1. Post-translationally, preferentially phosphorylated in cells arrested early in S phase. Phosphorylation in the C-terminus weakens the interaction with CDC45. As to expression, expressed in many adult and fetal tissues. Highest levels in testis, ovary, spleen and in adult and fetal brain.

The protein localises to the nucleus. It localises to the cytoplasm. The catalysed reaction is glycyl-tRNA(Ala) + H2O = tRNA(Ala) + glycine + H(+). The enzyme catalyses a D-aminoacyl-tRNA + H2O = a tRNA + a D-alpha-amino acid + H(+). Its function is as follows. Possible ATPase involved in DNA replication, may facilitate loading of CDC45 onto pre-replication complexes. Functionally, an aminoacyl-tRNA editing enzyme that deacylates mischarged D-aminoacyl-tRNAs. Also deacylates mischarged glycyl-tRNA(Ala), protecting cells against glycine mischarging by AlaRS. Acts via tRNA-based rather than protein-based catalysis; rejects L-amino acids rather than detecting D-amino acids in the active site. By recycling D-aminoacyl-tRNA to D-amino acids and free tRNA molecules, this enzyme counteracts the toxicity associated with the formation of D-aminoacyl-tRNA entities in vivo and helps enforce protein L-homochirality. This is D-aminoacyl-tRNA deacylase 1 (DTD1) from Homo sapiens (Human).